Reading from the N-terminus, the 687-residue chain is Outer dynein arm-docking complex subunit 1 (687 aa).

Coiled coils occupy residues 100-193 (QVRV…YLNV), 222-267 (REEA…LKLK), and 341-421 (INEQ…LFTR). Residues 126–147 (SRNSAHSKNARSPGCVQHDKVK) form a disordered region. Disordered stretches follow at residues 363-388 (VSGR…QRVD), 487-511 (FPKK…AKDD), and 540-687 (ESTP…QSNY). Positions 366–388 (RRSEEDRRAQQEQQRAELQQRVD) are enriched in basic and acidic residues. Low complexity predominate over residues 544-556 (SMTSSTQKVSSSS). Composition is skewed to polar residues over residues 557–611 (RLVT…SSRG) and 620–629 (RSPNSSSYLG). Low complexity predominate over residues 660–680 (SPGPASSPGPASSTGQASSTS).

It belongs to the ODA1/DCC2 family. Component of the outer dynein arm-docking complex along with ODAD2, ODAD3, ODAD4 and CLXN. Interacts with ODAD3. Interacts with ODAD4; this interaction may facilitate the recruitment and/or attachment of outer dynein arm docking complex proteins, including ODAD1, ODAD3, and ODAD4 to ciliary axonemes. Interacts with DNAH9. Interacts with MNS1. Interacts with PIERCE1 and PIERCE2; the interactions link the outer dynein arms docking complex (ODA-DC) to the internal microtubule inner proteins (MIP) in cilium axoneme. As to expression, expressed in trachea multiciliated cells.

It is found in the cytoplasm. The protein resides in the cytoskeleton. It localises to the cilium axoneme. Functionally, component of the outer dynein arm-docking complex (ODA-DC) that mediates outer dynein arms (ODA) binding onto the doublet microtubule. Involved in mediating assembly of both ODAs and their axonemal docking complex onto ciliary microtubules. This Bos taurus (Bovine) protein is Outer dynein arm-docking complex subunit 1 (ODAD1).